A 246-amino-acid chain; its full sequence is Phycobilisome rod-core linker polypeptide CpcG2 (246 aa).

Residues 11 to 189 (SSQNQRVAGY…YWRDKLENSR (179 aa)) enclose the PBS-linker domain. Residues 224–246 (DTTRRDRPTVPASINPTASFPLR) form a disordered region. The span at 235–246 (ASINPTASFPLR) shows a compositional bias: polar residues.

The protein belongs to the phycobilisome linker protein family. In terms of assembly, the phycobilisome is a hemidiscoidal structure that is composed of two distinct substructures: a core complex and a number of rods radiating from the core.

It localises to the cellular thylakoid membrane. Rod-core linker protein required for attachment of phycocyanin to allophycocyanin in cores of phycobilisomes. In terms of biological role, linker polypeptides determine the state of aggregation and the location of the disk-shaped phycobiliprotein units within the phycobilisome and modulate their spectroscopic properties in order to mediate a directed and optimal energy transfer. This chain is Phycobilisome rod-core linker polypeptide CpcG2 (cpcG2), found in Thermosynechococcus vestitus (strain NIES-2133 / IAM M-273 / BP-1).